Consider the following 374-residue polypeptide: tRNA N6-adenosine threonylcarbamoyltransferase (374 aa).

Positions 117 and 121 each coordinate Fe cation. Substrate-binding positions include 140–144 (LVSGG), Asp174, Gly187, Asp191, and Asn283. Asp311 contributes to the Fe cation binding site. Low complexity predominate over residues 337-352 (ADSSLPVTEPHVPGQG). The segment at 337-374 (ADSSLPVTEPHVPGQGHPHGHPHGHDHVHEVSKENLYS) is disordered. Over residues 359–374 (HGHDHVHEVSKENLYS) the composition is skewed to basic and acidic residues.

The protein belongs to the KAE1 / TsaD family. Fe(2+) serves as cofactor.

The protein localises to the cytoplasm. The enzyme catalyses L-threonylcarbamoyladenylate + adenosine(37) in tRNA = N(6)-L-threonylcarbamoyladenosine(37) in tRNA + AMP + H(+). Required for the formation of a threonylcarbamoyl group on adenosine at position 37 (t(6)A37) in tRNAs that read codons beginning with adenine. Is involved in the transfer of the threonylcarbamoyl moiety of threonylcarbamoyl-AMP (TC-AMP) to the N6 group of A37, together with TsaE and TsaB. TsaD likely plays a direct catalytic role in this reaction. The chain is tRNA N6-adenosine threonylcarbamoyltransferase from Streptomyces coelicolor (strain ATCC BAA-471 / A3(2) / M145).